The sequence spans 129 residues: uncharacterized protein (129 aa).

Belongs to the asfivirus C129R family.

It is found in the virion. Its function is as follows. Plays a role in the inhibition of type I interferon signaling pathway. Mechanistically, specifically interacts with 2',3'-cGAMP and cleaves it via its phosphodiesterase activity. In turn, prevents 2',3'-cGAMP interaction with host ER-resident STING1 leading to inhibition of downstream signaling pathway and type I interferon production. This is an uncharacterized protein from Ornithodoros (relapsing fever ticks).